The sequence spans 374 residues: Phosphatidyl-myo-inositol mannosyltransferase (374 aa).

Residues Tyr-9 and Gly-16 each contribute to the GDP-alpha-D-mannose site. A 1,2-diacyl-sn-glycero-3-phospho-(1D-myo-inositol) is bound by residues Gln-18, 62 to 63 (YN), and Arg-68. Residues Arg-196, 201-202 (RK), 251-253 (VDD), Lys-256, 274-278 (ESFGI), and Glu-282 contribute to the GDP-alpha-D-mannose site.

This sequence belongs to the glycosyltransferase group 1 family. Glycosyltransferase 4 subfamily. Monomer. Mg(2+) is required as a cofactor.

The protein localises to the cell membrane. The enzyme catalyses a 1,2-diacyl-sn-glycero-3-phospho-(1D-myo-inositol) + GDP-alpha-D-mannose = a 1,2-diacyl-sn-glycero-3-phospho-[alpha-D-mannopyranosyl-(1&lt;-&gt;6)-D-myo-inositol] + GDP + H(+). It functions in the pathway phospholipid metabolism; phosphatidylinositol metabolism. Its function is as follows. Involved in the biosynthesis of phosphatidyl-myo-inositol mannosides (PIM) which are early precursors in the biosynthesis of lipomannans (LM) and lipoarabinomannans (LAM). Catalyzes the addition of a mannosyl residue from GDP-D-mannose (GDP-Man) to the position 2 of the carrier lipid phosphatidyl-myo-inositol (PI) to generate a phosphatidyl-myo-inositol bearing an alpha-1,2-linked mannose residue (PIM1). The protein is Phosphatidyl-myo-inositol mannosyltransferase of Mycobacterium leprae (strain TN).